Reading from the N-terminus, the 79-residue chain is Mycoredoxin 1 (79 aa).

The Glutaredoxin domain occupies 1–79 (MSNVTIYATD…EVIAKIEALA (79 aa)).

It belongs to the glutaredoxin family.

It is found in the cytoplasm. It carries out the reaction [mycoredoxin]-L-cysteine + arseno-mycothiol + H(+) = [mycoredoxin]-S-mycothiol-L-cysteine + arsenite. Its function is as follows. Involved in defense against toxic arsenate. Involved in the mycothiol/myoredoxin redox pathway which uses a mycothioltransferase mechanism; functions as a monothiol mixed disulfide reductase and is recycled by a second mycothiol forming mycothione which in turn is reduced in a NADPH-dependent manner. The sequence is that of Mycoredoxin 1 (mrx1) from Corynebacterium glutamicum (strain ATCC 13032 / K051).